Consider the following 442-residue polypeptide: MTLQLPNDPARSDVLSARPTLWINSLYRDDAIGDTCLPLVPDQVDVAQSDWERLAPLLETCFPELKKTAGAIRSDLTELHALREALGYGGGEFGRVFAKADSALPVAGSIKARGGVYEVFVFAEELARREGLIGDREDIRHLASAEARAFFSSYSIAVGSTGNLGLSVGVAARALGFEATVHMSSDAKPWKVERLRKLGVKVVQHEADYTTAVENARSAAEDDPAVYFVDDEQSRRLFLGYSVAASELVDQLQTFGVAVDADRPLFLYLPCGIGGAPGGVTYGAKKVFGDNAHCFFVEPVQSPCALVHMMSGSEELVSVYDVGLTNSTEADGMAVARMSAFVATVMRNMLAGVFTVDDASLFRWLLLAHEVQGLRLEPSAAAGFAGPGFIVKHPQGRAFCERLKLSDRLRQATHVVWTTGGSFVPQEQFDQFLEIAQASRSR.

Lys111 is modified (N6-(pyridoxal phosphate)lysine).

This sequence belongs to the serine/threonine dehydratase family. DsdA subfamily. Requires pyridoxal 5'-phosphate as cofactor.

It catalyses the reaction D-serine = pyruvate + NH4(+). In Sinorhizobium medicae (strain WSM419) (Ensifer medicae), this protein is Probable D-serine dehydratase.